The primary structure comprises 132 residues: MIKALNTVWQYLRAFILIYACLYAGIFIASLLPITIPGSIIGMLIMFLLLALQILPAKWVNPGCFVLIRYMALLFVPIGVGVMQYYDVLKAQFGPIVVSCAISTLVVFLVVSWSSHLVHGERKVVGQKGNQK.

Helical transmembrane passes span 8-28 (VWQYLRAFILIYACLYAGIFI), 31-51 (LLPITIPGSIIGMLIMFLLLA), 63-83 (GCFVLIRYMALLFVPIGVGVM), and 93-113 (FGPIVVSCAISTLVVFLVVSW).

It belongs to the UPF0299 family.

The protein localises to the cell inner membrane. The protein is UPF0299 membrane protein Ent638_2744 of Enterobacter sp. (strain 638).